A 1030-amino-acid polypeptide reads, in one-letter code: Importin beta-like SAD2 homolog (1030 aa).

Met-1 carries the N-acetylmethionine modification. Positions 25 to 99 constitute an Importin N-terminal domain; it reads AEQSLNQLQH…RNQILVFVSQ (75 aa). Disordered regions lie at residues 886 to 928 and 940 to 964; these read AAKA…GSTL and SYSD…PIDE. Composition is skewed to acidic residues over residues 890-924 and 943-964; these read EEEE…DETD and DDDD…PIDE.

It belongs to the importin beta family.

The protein resides in the cytoplasm. It localises to the nucleus. Functions probably in nuclear protein import, either by acting as autonomous nuclear transport receptor or as an adapter-like protein in association with other importin subunits. This Arabidopsis thaliana (Mouse-ear cress) protein is Importin beta-like SAD2 homolog.